We begin with the raw amino-acid sequence, 846 residues long: Enhancer of polycomb-like protein 1 (846 aa).

Disordered regions lie at residues 169-204, 391-466, 587-609, 682-702, and 759-804; these read FNSK…KGDA, TSDE…APDA, EKKR…PKAM, AADA…PQPN, and QVQA…GVKQ. The span at 180-203 shows a compositional bias: basic and acidic residues; that stretch reads VKSDKEQGRGMRVKGKDREKEKGD. The span at 411 to 426 shows a compositional bias: polar residues; it reads PSLSGQTPLTSGQSSS. Positions 432-452 are enriched in basic and acidic residues; the sequence is TDKDREERAQRERYDAQRNAE. Residues 434–490 are a coiled coil; the sequence is KDREERAQRERYDAQRNAERSGILSGRSNAPDALKERLQALQQKTEEMLARKKEQDA. Over residues 686–702 the composition is skewed to pro residues; sequence KPPPAPIFQKPPAPQPN. The span at 759-773 shows a compositional bias: low complexity; that stretch reads QVQAQGQGHPQAHLQ. The span at 774–796 shows a compositional bias: polar residues; sequence THPQGVSQPNGVNSPMPNGQQML.

It belongs to the enhancer of polycomb family. In terms of assembly, component of the NuA4 histone acetyltransferase complex.

The protein resides in the nucleus. Functionally, component of the NuA4 histone acetyltransferase complex which is involved in transcriptional activation of selected genes principally by acetylation of nucleosomal histone H4 and H2A. The NuA4 complex is also involved in DNA repair. Involved in gene silencing by neighboring heterochromatin, blockage of the silencing spreading along the chromosome, and required for cell cycle progression through G2/M. This chain is Enhancer of polycomb-like protein 1 (EPL1), found in Cryptococcus neoformans var. neoformans serotype D (strain B-3501A) (Filobasidiella neoformans).